Consider the following 90-residue polypeptide: Small ribosomal subunit protein uS15c (90 aa).

It belongs to the universal ribosomal protein uS15 family. Part of the 30S ribosomal subunit.

The protein resides in the plastid. Its subcellular location is the chloroplast. The chain is Small ribosomal subunit protein uS15c (rps15) from Acorus calamus (Sweet flag).